The following is a 313-amino-acid chain: Short-chain dehydrogenase/reductase family 9C member 7 (313 aa).

29-53 is an NADP(+) binding site; it reads FITGCDSGFGNLLAKQLVDRGMQVL. Serine 160 is a binding site for substrate. The active-site Proton acceptor is the tyrosine 172. A Phosphoserine modification is found at serine 185.

This sequence belongs to the short-chain dehydrogenases/reductases (SDR) family. In terms of tissue distribution, expressed in the skin. Expressed in granular and cornified layers of the epidermis (at protein level). Highly expressed in liver.

The protein localises to the cytoplasm. The catalysed reaction is a N-[omega-(9R,10R)-epoxy-(13R)-hydroxy-(11E)-octadecenoyloxy]acyl-beta-D-glucosyl-(1&lt;-&gt;1)-sphing-4E-enine + NAD(+) = a N-[omega-(9R,10R)-epoxy-13-oxo-(11E)-octadecenoyloxy]acyl-beta-D-glucosyl-(1&lt;-&gt;1)-sphing-4E-enine + NADH + H(+). It catalyses the reaction a N-[omega-(9R,10R)-epoxy-(13R)-hydroxy-(11E)-octadecenoyloxy]-acylsphing-4E-enine + NAD(+) = a N-[omega-(9R,10R)-epoxy-13-oxo-(11E)-octadecenoyloxy]-acylsphing-4E-enine + NADH + H(+). Plays a crucial role in the formation of the epidermal permeability barrier. Catalyzes the NAD+-dependent dehydrogenation of the linoleate 9,10-trans-epoxy-11E-13-alcohol esterified in omega-O-acylceramides (such as in N-[omega-(9R,10R)-epoxy-(13R)-hydroxy-(11E)-octadecenoyloxy]-acylsphing-4E-enine) to the corresponding 13-ketone, the reactive moiety required for binding of epidermal ceramides to proteins. Displays weak conversion of all-trans-retinal to all-trans-retinol in the presence of NADH. Has apparently no steroid dehydrogenase activity. This chain is Short-chain dehydrogenase/reductase family 9C member 7 (SDR9C7), found in Homo sapiens (Human).